Consider the following 155-residue polypeptide: MSRRGTAEEKTAKSDPIYRNRLVNMLVNRILKHGKKSLAYQIIYRALKKIQQKTETNPLSVLRQAIRGVTPDIAVKSRRVGGSTHQVPIEIGSTQGKALAIRWLLAASRKRPGRNMAFKLSSELVDAAKGSGDAIRKKEETHKMAEANRAFAHFR.

This sequence belongs to the universal ribosomal protein uS7 family. In terms of assembly, part of the 30S ribosomal subunit.

It is found in the plastid. It localises to the chloroplast. In terms of biological role, one of the primary rRNA binding proteins, it binds directly to 16S rRNA where it nucleates assembly of the head domain of the 30S subunit. In Acorus calamus var. americanus (American sweet flag), this protein is Small ribosomal subunit protein uS7cz/uS7cy (rps7-A).